The chain runs to 99 residues: Plastocyanin (99 aa).

The Plastocyanin-like domain maps to 1-99; that stretch reads IEVLLGGDDG…AGMVGKVTVN (99 aa). Cu cation contacts are provided by H37, C84, H87, and M92.

It belongs to the plastocyanin family. Requires Cu(2+) as cofactor.

The protein localises to the plastid. It localises to the chloroplast thylakoid membrane. Its function is as follows. Participates in electron transfer between P700 and the cytochrome b6-f complex in photosystem I. This is Plastocyanin (PETE) from Cucurbita pepo (Vegetable marrow).